Reading from the N-terminus, the 85-residue chain is Small ribosomal subunit protein bS20 (85 aa).

The protein belongs to the bacterial ribosomal protein bS20 family.

In terms of biological role, binds directly to 16S ribosomal RNA. This is Small ribosomal subunit protein bS20 from Lactobacillus johnsonii (strain CNCM I-12250 / La1 / NCC 533).